Reading from the N-terminus, the 164-residue chain is Ecotin (164 aa).

The N-terminal stretch at 1–20 (MKMFVPAVVFAALASASAWA) is a signal peptide. The cysteines at positions 72 and 109 are disulfide-linked.

Belongs to the protease inhibitor I11 (ecotin) family. In terms of assembly, homodimer.

It is found in the periplasm. Its function is as follows. General inhibitor of pancreatic serine proteases: inhibits chymotrypsin, trypsin, elastases, factor X, kallikrein as well as a variety of other proteases. The polypeptide is Ecotin (Salmonella paratyphi A (strain ATCC 9150 / SARB42)).